The chain runs to 600 residues: Elongation factor 4 (600 aa).

The tr-type G domain maps to 5–187; the sequence is KYIRNFSIIA…AIVNKLHPPK (183 aa). Residues 17–22 and 134–137 contribute to the GTP site; these read DHGKST and NKID.

It belongs to the TRAFAC class translation factor GTPase superfamily. Classic translation factor GTPase family. LepA subfamily.

The protein resides in the cell inner membrane. It carries out the reaction GTP + H2O = GDP + phosphate + H(+). Required for accurate and efficient protein synthesis under certain stress conditions. May act as a fidelity factor of the translation reaction, by catalyzing a one-codon backward translocation of tRNAs on improperly translocated ribosomes. Back-translocation proceeds from a post-translocation (POST) complex to a pre-translocation (PRE) complex, thus giving elongation factor G a second chance to translocate the tRNAs correctly. Binds to ribosomes in a GTP-dependent manner. This chain is Elongation factor 4, found in Rickettsia akari (strain Hartford).